A 210-amino-acid chain; its full sequence is MTNYFESPFKGKLLTEQVKNPNIKVGRYSYYSGYYHGHSFDDCARYLLPDRDDVDQLIIGSFCSIGSGAAFIMAGNQGHRYDWVSSFPFFYMNEEPAFAKSVDAFQRAGDTVIGSDVWIGSEAMIMPGIKIGHGAVIGSRALVAKDVEPYTIVGGNPAKSIRKRFSEEEISMLLDMAWWDWPLEQIKEAMPFLCSSGIASLYRRWQGTSA.

Residue H79 is part of the active site.

It belongs to the transferase hexapeptide repeat family.

The enzyme catalyses chloramphenicol + acetyl-CoA = chloramphenicol 3-acetate + CoA. Its function is as follows. This enzyme is an effector of chloramphenicol resistance in bacteria. This chain is Chloramphenicol acetyltransferase (catB2), found in Escherichia coli.